The primary structure comprises 522 residues: Aspartic and glutamic acid-rich protein (522 aa).

An N-terminal signal peptide occupies residues 1–16; sequence MKVFVYLLVTFSLTNA. Basic and acidic residues-rich tracts occupy residues 72–81 and 93–102; these read YDDFFPKDTS and SRNDDGYDLA. Positions 72 to 497 are disordered; sequence YDDFFPKDTS…KSKDAAQGNI (426 aa). Residues 109-125 are compositionally biased toward acidic residues; the sequence is DDEEAYDDFDEVDDRAD. Over residues 142 to 152 the composition is skewed to basic and acidic residues; it reads KLPAEEESKND. Acidic residues-rich tracts occupy residues 153–166, 173–200, 228–261, and 267–283; these read MDEETFEDEPEEDK, FAEDERADEREDDDADFDFNDEEDEDEV, DNEEEYADESDDEAEEDSEETADDFEDDPEDESD, and EVEDESEENYQDDTEEG. Residues 284-343 are compositionally biased toward basic and acidic residues; that stretch reads SEIKQNDETEEQPEKKFDADKEHEDAPEPLKEKLSDESKARAEDESDKSEDAAKEIKEPE. Residues 319 to 465 adopt a coiled-coil conformation; it reads DESKARAEDE…KSNLALKRDE (147 aa). A compositionally biased stretch (acidic residues) spans 358–374; sequence DEAELLDDEAELSDDEA. Composition is skewed to basic and acidic residues over residues 375–397, 407–453, and 461–491; these read ELSKDEAEQSSDEAEKSEDKAEK, DEAK…EFAK, and LKRDENRPLAKGLRESAAHLRDFPSEKKSKD.

In terms of tissue distribution, component of the acid-soluble organic matrix of the aragonitic skeleton (at protein level).

The protein resides in the secreted. This chain is Aspartic and glutamic acid-rich protein, found in Acropora millepora (Staghorn coral).